A 338-amino-acid chain; its full sequence is Large ribosomal subunit protein uL3 (338 aa).

Residues 228–237 (HKHRKGHRRT) are compositionally biased toward basic residues. A disordered region spans residues 228-255 (HKHRKGHRRTGTIGPQAPALMFTQPRPG).

Belongs to the universal ribosomal protein uL3 family. In terms of assembly, part of the 50S ribosomal subunit. Forms a cluster with proteins L14 and L24e.

Functionally, one of the primary rRNA binding proteins, it binds directly near the 3'-end of the 23S rRNA, where it nucleates assembly of the 50S subunit. The polypeptide is Large ribosomal subunit protein uL3 (Pyrobaculum calidifontis (strain DSM 21063 / JCM 11548 / VA1)).